A 115-amino-acid polypeptide reads, in one-letter code: NADH-ubiquinone oxidoreductase chain 3 (115 aa).

A run of 3 helical transmembrane segments spans residues leucine 4–leucine 24, phenylalanine 55–leucine 75, and methionine 87–leucine 107.

Belongs to the complex I subunit 3 family. As to quaternary structure, core subunit of respiratory chain NADH dehydrogenase (Complex I) which is composed of 45 different subunits. Interacts with TMEM186. Interacts with TMEM242.

Its subcellular location is the mitochondrion inner membrane. The enzyme catalyses a ubiquinone + NADH + 5 H(+)(in) = a ubiquinol + NAD(+) + 4 H(+)(out). In terms of biological role, core subunit of the mitochondrial membrane respiratory chain NADH dehydrogenase (Complex I) which catalyzes electron transfer from NADH through the respiratory chain, using ubiquinone as an electron acceptor. Essential for the catalytic activity of complex I. The protein is NADH-ubiquinone oxidoreductase chain 3 of Peromyscus eremicus (Cactus mouse).